The following is a 273-amino-acid chain: Probable ribosomal RNA small subunit methyltransferase A (273 aa).

S-adenosyl-L-methionine contacts are provided by N23, L25, G50, E71, D95, and N110.

The protein belongs to the class I-like SAM-binding methyltransferase superfamily. rRNA adenine N(6)-methyltransferase family. RsmA subfamily.

It localises to the cytoplasm. Its function is as follows. Specifically dimethylates two adjacent adenosines in the loop of a conserved hairpin near the 3'-end of 16S rRNA in the 30S particle. May play a critical role in biogenesis of 30S subunits. This chain is Probable ribosomal RNA small subunit methyltransferase A, found in Pyrococcus furiosus (strain ATCC 43587 / DSM 3638 / JCM 8422 / Vc1).